A 572-amino-acid chain; its full sequence is Potassium-transporting ATPase potassium-binding subunit (572 aa).

11 helical membrane passes run 5–25 (LAAG…YVPL), 71–91 (VGYT…LYVL), 97–117 (VLPL…NTAV), 142–162 (GLAV…VALI), 188–208 (ILLP…TIQS), 258–278 (PTPL…VCLT), 292–312 (LTVL…VTWA), 387–407 (GLYG…LLVG), 422–442 (ITMA…GTGI), 500–520 (LGMA…ALAG), and 548–568 (GTVL…GPIA).

Belongs to the KdpA family. As to quaternary structure, the system is composed of three essential subunits: KdpA, KdpB and KdpC.

It localises to the cell membrane. Its function is as follows. Part of the high-affinity ATP-driven potassium transport (or Kdp) system, which catalyzes the hydrolysis of ATP coupled with the electrogenic transport of potassium into the cytoplasm. This subunit binds the extracellular potassium ions and delivers the ions to the membrane domain of KdpB through an intramembrane tunnel. The chain is Potassium-transporting ATPase potassium-binding subunit from Mycobacteroides abscessus (strain ATCC 19977 / DSM 44196 / CCUG 20993 / CIP 104536 / JCM 13569 / NCTC 13031 / TMC 1543 / L948) (Mycobacterium abscessus).